The chain runs to 119 residues: MPRVKRGVTAKARHKKILDQAKGYYGARSRTYRVAKQAVIKAGQYAYRDRRQKKRQFRALWITRINAQARECGLSYSRLIDGLKKASIELDRKILADMAVHDKVAFAAIAEQAKAALAG.

Belongs to the bacterial ribosomal protein bL20 family.

Its function is as follows. Binds directly to 23S ribosomal RNA and is necessary for the in vitro assembly process of the 50S ribosomal subunit. It is not involved in the protein synthesizing functions of that subunit. This Legionella pneumophila (strain Paris) protein is Large ribosomal subunit protein bL20.